Here is a 163-residue protein sequence, read N- to C-terminus: 16S rRNA aminocarboxypropyltransferase (163 aa).

Positions 18, 66, 87, and 106 each coordinate S-adenosyl-L-methionine.

The protein belongs to the TDD superfamily. TSR3 family.

The protein localises to the cytoplasm. It catalyses the reaction an N(1)-methylpseudouridine in rRNA + S-adenosyl-L-methionine = N(1)-methyl-N(3)-[(3S)-3-amino-3-carboxypropyl]pseudouridine in rRNA + S-methyl-5'-thioadenosine + H(+). Its function is as follows. Aminocarboxypropyltransferase that catalyzes the aminocarboxypropyl transfer on pseudouridine corresponding to position 914 in M.jannaschii 16S rRNA. It constitutes the last step in biosynthesis of the hypermodified N1-methyl-N3-(3-amino-3-carboxypropyl) pseudouridine (m1acp3-Psi). The polypeptide is 16S rRNA aminocarboxypropyltransferase (Thermoplasma acidophilum (strain ATCC 25905 / DSM 1728 / JCM 9062 / NBRC 15155 / AMRC-C165)).